Consider the following 432-residue polypeptide: Lysosomal acid phosphatase (432 aa).

Residues 1–32 form the signal peptide; that stretch reads MADGSCLGSGPQLGLIALLVVLLFSAVPLAQS. Residues 33–384 are Lumenal-facing; that stretch reads RELRFVTLVY…TTSFIMTEET (352 aa). His44 serves as the catalytic Nucleophile. 5 N-linked (GlcNAc...) asparagine glycosylation sites follow: Asn94, Asn135, Asn179, Asn193, and Asn269. Disulfide bonds link Cys161–Cys373, Cys214–Cys313, and Cys348–Cys352. Catalysis depends on Asp290, which acts as the Proton donor. N-linked (GlcNAc...) asparagine glycosylation is found at Asn325 and Asn334. The chain crosses the membrane as a helical span at residues 385-405; that stretch reads IIGLTIGAIALFIIIVVLMLL. At 406–432 the chain is on the cytoplasmic side; it reads SCNEPKDDGYQHVSDEGDDHETKGLAM.

The protein belongs to the histidine acid phosphatase family. Post-translationally, the membrane-bound form is converted to the soluble form by sequential proteolytic processing. First, the C-terminal cytoplasmic tail is removed. Cleavage by a lysosomal protease releases the soluble form in the lysosome lumen.

It localises to the lysosome membrane. The protein resides in the lysosome lumen. It carries out the reaction a phosphate monoester + H2O = an alcohol + phosphate. This is Lysosomal acid phosphatase (acp2) from Xenopus laevis (African clawed frog).